The primary structure comprises 360 residues: Phospho-N-acetylmuramoyl-pentapeptide-transferase (360 aa).

Helical transmembrane passes span 2 to 22 (LVWV…FQYL), 26 to 46 (AILG…VMIR), 73 to 93 (TMGG…WADL), 97 to 117 (YVLI…VDDW), 134 to 154 (YFWQ…TAHL), 168 to 188 (ITLA…VGGS), 199 to 219 (GLAI…AYLS), 236 to 256 (TGEL…FLWF), 263 to 283 (VFMG…VAVI), 288 to 308 (LVFF…ILQV), and 339 to 359 (IVRF…TLKI).

Belongs to the glycosyltransferase 4 family. MraY subfamily. It depends on Mg(2+) as a cofactor.

The protein resides in the cell inner membrane. It catalyses the reaction UDP-N-acetyl-alpha-D-muramoyl-L-alanyl-gamma-D-glutamyl-meso-2,6-diaminopimeloyl-D-alanyl-D-alanine + di-trans,octa-cis-undecaprenyl phosphate = di-trans,octa-cis-undecaprenyl diphospho-N-acetyl-alpha-D-muramoyl-L-alanyl-D-glutamyl-meso-2,6-diaminopimeloyl-D-alanyl-D-alanine + UMP. Its pathway is cell wall biogenesis; peptidoglycan biosynthesis. Functionally, catalyzes the initial step of the lipid cycle reactions in the biosynthesis of the cell wall peptidoglycan: transfers peptidoglycan precursor phospho-MurNAc-pentapeptide from UDP-MurNAc-pentapeptide onto the lipid carrier undecaprenyl phosphate, yielding undecaprenyl-pyrophosphoryl-MurNAc-pentapeptide, known as lipid I. This is Phospho-N-acetylmuramoyl-pentapeptide-transferase from Hahella chejuensis (strain KCTC 2396).